We begin with the raw amino-acid sequence, 962 residues long: Voltage-gated delayed rectifier potassium channel KCNH1 (962 aa).

At 1–220 (MTMAGGRRGL…LHYCVFKTTW (220 aa)) the chain is on the cytoplasmic side. Residues 14–94 (QNTFLENIVR…QTFENYEMNS (81 aa)) enclose the PAS domain. A PAC domain is found at 93–145 (NSFEILMYKKNRTPVWFFVKIAPIRNEQDKVVLFLCTFSDITAFKQPIEDDSC). The segment at 151 to 162 (FARLTRALTSSR) is required for phosphatidylinositol bisphosphate binding. A helical membrane pass occupies residues 221 to 241 (DWIILILTFYTAILVPYNVSF). The Extracellular segment spans residues 242 to 248 (KTRQNNV). Residues 249-269 (AWLVVDSIVDVIFLVDIVLNF) traverse the membrane as a helical segment. Residues 270-290 (HTTFVGPAGEVISDPKLIRMN) are Cytoplasmic-facing. A helical membrane pass occupies residues 291-309 (YLKTWFVIDLLSCLPYDVI). Over 310–318 (NAFENVDEG) the chain is Extracellular. The chain crosses the membrane as a helical; Voltage-sensor span at residues 319–341 (ISSLFSSLKVVRLLRLGRVARKL). Over 342–350 (DHYIEYGAA) the chain is Cytoplasmic. Residues 351–372 (VLVLLVCVFGLAAHWMACIWYS) form a helical membrane-spanning segment. Residues 373 to 421 (IGDYEIFDEDTKTIRNNSWLYQLALDIGTPYQFNGSGSGKWEGGPSKNS) are Extracellular-facing. N-linked (GlcNAc...) asparagine glycans are attached at residues Asn-388 and Asn-406. The segment at residues 422–443 (VYISSLYFTMTSLTSVGFGNIA) is an intramembrane region (pore-forming). Positions 436 to 441 (SVGFGN) match the Selectivity filter motif. At 444 to 450 (PSTDIEK) the chain is on the extracellular side. The helical transmembrane segment at 451-471 (IFAVAIMMIGSLLYATIFGNV) threads the bilayer. The Cytoplasmic segment spans residues 472-962 (TTIFQQMYAN…ESDRDIFGAS (491 aa)). The segment at 646–743 (KRDALQKVLE…LDDLDVEKGN (98 aa)) is calmodulin-binding. An interaction with cyclic nucleotide-binding pocket region spans residues 672 to 674 (YNL). Basic and acidic residues predominate over residues 830–852 (ESMETLPERTKASGEATLKKTDS). Disordered regions lie at residues 830-859 (ESMETLPERTKASGEATLKKTDSCDSGITK) and 933-962 (SRGSSQSPQDTCEVSRPQSPESDRDIFGAS). The tract at residues 897–937 (ATVLEVKHELKEDIKALNAKMTSIEKQLSEILRILMSRGSS) is CAD (involved in subunit assembly). The segment covering 934 to 952 (RGSSQSPQDTCEVSRPQSP) has biased composition (polar residues). 3 positions are modified to phosphoserine: Ser-947, Ser-951, and Ser-954. Residues 953-962 (ESDRDIFGAS) show a composition bias toward basic and acidic residues.

Belongs to the potassium channel family. H (Eag) (TC 1.A.1.20) subfamily. Kv10.1/KCNH1 sub-subfamily. Homomultimer. The potassium channel is composed of a homo- or heterotetrameric complex of pore-forming alpha subunits that can associate with modulating beta subunits. Heteromultimer with KCNH5/EAG2. Interacts with ALG10B. Interacts with RABEP1. Interacts (via C-terminus) with CTTN. Interacts (via cytoplasmic region) with Ca(2+)-bound calmodulin. Post-translationally, channel activity is regulated via tyrosine phosphorylation/dephosphorylation by SRC and PTPN6. As to expression, detected in cerebellum, at parallel fiber synapses on Purkinje cell spines. Detected in hippocampus neurons (at protein level). Detected in brain, but not in the other tissues tested; expression is highest in granular cells of the dentate gyrus, in hippocampus CA3 pyramidal cells, and in cerebellar granule cells. Detected in pituitary.

It localises to the cell membrane. It is found in the nucleus inner membrane. The protein resides in the cell projection. The protein localises to the dendrite. Its subcellular location is the axon. It localises to the presynaptic cell membrane. It is found in the perikaryon. The protein resides in the postsynaptic density membrane. The protein localises to the early endosome membrane. It catalyses the reaction K(+)(in) = K(+)(out). With respect to regulation, channel activity is inhibited by interaction with Ca(2+)-bound calmodulin. Interaction of a single pore-forming alpha subunit with a calmodulin chain is sufficient to promote channel closure. Channel activity is not regulated by cyclic nucleotides. Channel activity is inhibited by binding intracellular phosphatidylinositol-3,5-bisphosphate and phosphatidylinositol-4,5-bisphosphate (PIP2), but is not inhibited by phosphatidylinositol 4-phosphate. Pore-forming (alpha) subunit of a voltage-gated delayed rectifier potassium channel that mediates outward-rectifying potassium currents which, on depolarization, reaches a steady-state level and do not inactivate. The activation kinetics depend on the prepulse potential and external divalent cation concentration. With negative prepulses, the current activation is delayed and slowed down several fold, whereas more positive prepulses speed up activation. The time course of activation is biphasic with a fast and a slowly activating current component. Activates at more positive membrane potentials and exhibit a steeper activation curve. Channel properties are modulated by subunit assembly. Mediates IK(NI) current in myoblasts. Involved in the regulation of cell proliferation and differentiation, in particular adipogenic and osteogenic differentiation in bone marrow-derived mesenchymal stem cells (MSCs). This chain is Voltage-gated delayed rectifier potassium channel KCNH1, found in Rattus norvegicus (Rat).